A 251-amino-acid chain; its full sequence is MTSSTSPETPSDPSQTRYKRVMLKISGEALMGDQGFGLHPPTVKRIAHEIKTVHDMGVEICMVIGGGNIFRGLSGAAQGMERTTADYMGMLATVMNALGMQAALEGLGVFTRVISAIRMDEVAEPYIRRRAVRHLEKKRVCIFAAGTGNPYFTTDTAATLRANEMACEAIFMGKNGVDGVYDKDPALHDDAVRYDEISYDEVLAKRLKVMDASAIALARDNNLPLIVFSLDTAGGFRGILAGEGTYTKVQG.

24-27 (KISG) contacts ATP. The involved in allosteric activation by GTP stretch occupies residues 32-37 (GDQGFG). Glycine 66 provides a ligand contact to UMP. ATP-binding residues include glycine 67 and arginine 71. Residues aspartate 86 and 147–154 (TGNPYFTT) each bind UMP. ATP is bound by residues asparagine 175, tyrosine 181, and aspartate 184.

This sequence belongs to the UMP kinase family. In terms of assembly, homohexamer.

It localises to the cytoplasm. The catalysed reaction is UMP + ATP = UDP + ADP. It functions in the pathway pyrimidine metabolism; CTP biosynthesis via de novo pathway; UDP from UMP (UMPK route): step 1/1. Allosterically activated by GTP. Inhibited by UTP. In terms of biological role, catalyzes the reversible phosphorylation of UMP to UDP. This Ruegeria pomeroyi (strain ATCC 700808 / DSM 15171 / DSS-3) (Silicibacter pomeroyi) protein is Uridylate kinase.